We begin with the raw amino-acid sequence, 313 residues long: Protein FixB (313 aa).

L255–D283 lines the FAD pocket.

This sequence belongs to the ETF alpha-subunit/FixB family. In terms of assembly, heterodimer of FixA and FixB.

Its pathway is amine and polyamine metabolism; carnitine metabolism. Its function is as follows. Required for anaerobic carnitine reduction. May bring reductant to CaiA. The protein is Protein FixB of Escherichia coli O17:K52:H18 (strain UMN026 / ExPEC).